Here is a 433-residue protein sequence, read N- to C-terminus: Enolase (433 aa).

Gln-167 contributes to the (2R)-2-phosphoglycerate binding site. Glu-209 (proton donor) is an active-site residue. Asp-246, Glu-291, and Asp-318 together coordinate Mg(2+). (2R)-2-phosphoglycerate is bound by residues Lys-343, Arg-372, Ser-373, and Lys-394. Lys-343 acts as the Proton acceptor in catalysis.

This sequence belongs to the enolase family. Component of the RNA degradosome, a multiprotein complex involved in RNA processing and mRNA degradation. The cofactor is Mg(2+).

The protein localises to the cytoplasm. It localises to the secreted. Its subcellular location is the cell surface. The catalysed reaction is (2R)-2-phosphoglycerate = phosphoenolpyruvate + H2O. The protein operates within carbohydrate degradation; glycolysis; pyruvate from D-glyceraldehyde 3-phosphate: step 4/5. Functionally, catalyzes the reversible conversion of 2-phosphoglycerate (2-PG) into phosphoenolpyruvate (PEP). It is essential for the degradation of carbohydrates via glycolysis. This Tolumonas auensis (strain DSM 9187 / NBRC 110442 / TA 4) protein is Enolase.